The chain runs to 515 residues: Cytochrome P450 1A1 (515 aa).

Phenylalanine 225 contributes to the substrate binding site. Cysteine 459 is a heme binding site.

This sequence belongs to the cytochrome P450 family. It depends on heme as a cofactor.

The protein resides in the endoplasmic reticulum membrane. It localises to the microsome membrane. The catalysed reaction is an organic molecule + reduced [NADPH--hemoprotein reductase] + O2 = an alcohol + oxidized [NADPH--hemoprotein reductase] + H2O + H(+). In terms of biological role, cytochromes P450 are a group of heme-thiolate monooxygenases. They oxidize a variety of structurally unrelated compounds, including steroids, fatty acids, and xenobiotics. This chain is Cytochrome P450 1A1 (cyp1a1), found in Microgadus tomcod (Atlantic tomcod).